The chain runs to 336 residues: Small ribosomal subunit protein RACK1y (336 aa).

WD repeat units follow at residues 15 to 55, 74 to 113, 116 to 155, 164 to 205, 208 to 247, 249 to 287, and 297 to 336; these read GHND…TAVA, GHSH…TTRR, GHTK…KYTI, GHTG…LRTK, GHNG…MLYK, DAGA…VMQD, and SQML…GYAI.

Belongs to the WD repeat G protein beta family. Ribosomal protein RACK1 subfamily. As to quaternary structure, homodimer and heterodimer with RACK1A.

In terms of biological role, component of the RACK1 regulatory proteins that play a role in multiple signal transduction pathways. The protein is Small ribosomal subunit protein RACK1y (RACK1B) of Oryza sativa subsp. japonica (Rice).